A 201-amino-acid chain; its full sequence is Large ribosomal subunit protein uL4 (201 aa).

Residues 43 to 69 are disordered; the sequence is TKAQKTRSEVAGGGKKPWRQKGTGRAR.

Belongs to the universal ribosomal protein uL4 family. In terms of assembly, part of the 50S ribosomal subunit.

One of the primary rRNA binding proteins, this protein initially binds near the 5'-end of the 23S rRNA. It is important during the early stages of 50S assembly. It makes multiple contacts with different domains of the 23S rRNA in the assembled 50S subunit and ribosome. Its function is as follows. Forms part of the polypeptide exit tunnel. The sequence is that of Large ribosomal subunit protein uL4 from Idiomarina loihiensis (strain ATCC BAA-735 / DSM 15497 / L2-TR).